The sequence spans 100 residues: Small ribosomal subunit protein uS14c (100 aa).

The protein belongs to the universal ribosomal protein uS14 family. Part of the 30S ribosomal subunit.

The protein resides in the plastid. The protein localises to the chloroplast. Functionally, binds 16S rRNA, required for the assembly of 30S particles. In Carica papaya (Papaya), this protein is Small ribosomal subunit protein uS14c.